The following is a 459-amino-acid chain: tRNA modification GTPase MnmE (459 aa).

Residues R23, E86, and R125 each coordinate (6S)-5-formyl-5,6,7,8-tetrahydrofolate. Residues 221-380 (GLKTVIVGKP…LQDKIESMVY (160 aa)) form the TrmE-type G domain. N231 serves as a coordination point for K(+). Residues 231–236 (NVGKSS), 250–256 (TDIPGTT), and 275–278 (DTAG) contribute to the GTP site. S235 serves as a coordination point for Mg(2+). Positions 250, 252, and 255 each coordinate K(+). Residue T256 participates in Mg(2+) binding. Residue K459 coordinates (6S)-5-formyl-5,6,7,8-tetrahydrofolate.

Belongs to the TRAFAC class TrmE-Era-EngA-EngB-Septin-like GTPase superfamily. TrmE GTPase family. Homodimer. Heterotetramer of two MnmE and two MnmG subunits. Requires K(+) as cofactor.

The protein localises to the cytoplasm. Functionally, exhibits a very high intrinsic GTPase hydrolysis rate. Involved in the addition of a carboxymethylaminomethyl (cmnm) group at the wobble position (U34) of certain tRNAs, forming tRNA-cmnm(5)s(2)U34. This chain is tRNA modification GTPase MnmE, found in Clostridioides difficile (strain 630) (Peptoclostridium difficile).